Reading from the N-terminus, the 327-residue chain is Biotin synthase (327 aa).

Positions Gln51 to Arg278 constitute a Radical SAM core domain. [4Fe-4S] cluster-binding residues include Cys66, Cys70, and Cys73. Residues Cys110, Cys141, Cys201, and Arg273 each contribute to the [2Fe-2S] cluster site.

Belongs to the radical SAM superfamily. Biotin synthase family. Homodimer. [4Fe-4S] cluster serves as cofactor. Requires [2Fe-2S] cluster as cofactor.

It carries out the reaction (4R,5S)-dethiobiotin + (sulfur carrier)-SH + 2 reduced [2Fe-2S]-[ferredoxin] + 2 S-adenosyl-L-methionine = (sulfur carrier)-H + biotin + 2 5'-deoxyadenosine + 2 L-methionine + 2 oxidized [2Fe-2S]-[ferredoxin]. It participates in cofactor biosynthesis; biotin biosynthesis; biotin from 7,8-diaminononanoate: step 2/2. Catalyzes the conversion of dethiobiotin (DTB) to biotin by the insertion of a sulfur atom into dethiobiotin via a radical-based mechanism. This chain is Biotin synthase, found in Histophilus somni (strain 2336) (Haemophilus somnus).